A 543-amino-acid chain; its full sequence is Excitatory amino acid transporter 1 (543 aa).

Topologically, residues Met1 to Arg47 are cytoplasmic. A helical membrane pass occupies residues Asn48–Leu68. Residues Arg69–Glu86 lie on the Extracellular side of the membrane. The helical transmembrane segment at Leu87–Met108 threads the bilayer. The Cytoplasmic portion of the chain corresponds to Ala109 to Arg122. The helical transmembrane segment at Ala123–Ile145 threads the bilayer. At His146–Gly236 the chain is on the extracellular side. The helical transmembrane segment at Ser237–Met260 threads the bilayer. Residues Lys261–Glu269 lie on the Cytoplasmic side of the membrane. A helical transmembrane segment spans residues Phe270 to Ile297. The Extracellular portion of the chain corresponds to Ala298–Thr318. The helical transmembrane segment at Val319–Val340 threads the bilayer. Residues Thr341–Pro345 are Cytoplasmic-facing. Positions Trp346–Leu376 form an intramembrane region, discontinuously helical. An L-aspartate-binding site is contributed by Ser363–Ser365. Residues Glu377–Arg385 lie on the Cytoplasmic side of the membrane. A helical membrane pass occupies residues Ile386–Phe412. Residues Gly394, Thr396, and Asn398 each contribute to the Na(+) site. Thr402 contacts L-aspartate. Topologically, residues Ile413–Gln425 are extracellular. An intramembrane region (discontinuously helical) is located at residues Ile426 to Gly459. Ile443–Gly447 lines the L-aspartate pocket. The Extracellular portion of the chain corresponds to Leu460–Asp472. Residues Trp473–Val494 form a helical membrane-spanning segment. L-aspartate-binding residues include Asp476 and Asn483. The Na(+) site is built by Asn483 and Asp487. The Cytoplasmic portion of the chain corresponds to Glu495–Met543. Ser512 is modified (phosphoserine). Residues Pro522–Met543 form a disordered region. Positions Glu531 to Met543 are enriched in basic and acidic residues.

The protein belongs to the dicarboxylate/amino acid:cation symporter (DAACS) (TC 2.A.23) family. SLC1A3 subfamily. In terms of assembly, homotrimer. Glycosylated. In terms of tissue distribution, detected in brain and cerebellum. Both isoform GLAST-1 and GLAST-1A are expressed in bone and brain. In brain isoform GLAST-1 is highly enriched in the Purkinje cell layer in cerebellum.

It is found in the cell membrane. The catalysed reaction is K(+)(in) + L-glutamate(out) + 3 Na(+)(out) + H(+)(out) = K(+)(out) + L-glutamate(in) + 3 Na(+)(in) + H(+)(in). It carries out the reaction K(+)(in) + L-aspartate(out) + 3 Na(+)(out) + H(+)(out) = K(+)(out) + L-aspartate(in) + 3 Na(+)(in) + H(+)(in). It catalyses the reaction D-aspartate(out) + K(+)(in) + 3 Na(+)(out) + H(+)(out) = D-aspartate(in) + K(+)(out) + 3 Na(+)(in) + H(+)(in). In terms of biological role, sodium-dependent, high-affinity amino acid transporter that mediates the uptake of L-glutamate and also L-aspartate and D-aspartate. Functions as a symporter that transports one amino acid molecule together with two or three Na(+) ions and one proton, in parallel with the counter-transport of one K(+) ion. Plays a redundant role in the rapid removal of released glutamate from the synaptic cleft, which is essential for terminating the postsynaptic action of glutamate. This chain is Excitatory amino acid transporter 1 (Slc1a3), found in Rattus norvegicus (Rat).